The sequence spans 273 residues: MAHPIPVVVNGATGKMGRETIKAIAAADDVTLVGAIARSADVQGQDIGEIVGLGPLEVPVTNDLEGMLCLASQEREVPVVVDFTHPDCIYDNVRKAIAYGVRPVVGTTGLNNEQLQELAEFAEKASVGCLVIPNFSIGMVLLMQAAIQASRFYDHVEILELHHDQKADAPSGTAIKTAQMLAELGKTFNPPKVTEKETMPGARGAVGPENIRIHSVRLPGLIAHEEVIFGAPGEILTLRHDTMDRSCYMPGVLLAVRKVRQLTGLIYGLDRIP.

Residues 11 to 16 (GATGKM) and 106 to 108 (GTT) contribute to the NAD(+) site. His162 acts as the Proton donor/acceptor in catalysis. A (S)-2,3,4,5-tetrahydrodipicolinate-binding site is contributed by His163. Lys166 acts as the Proton donor in catalysis. 172–173 (GT) lines the (S)-2,3,4,5-tetrahydrodipicolinate pocket.

The protein belongs to the DapB family.

Its subcellular location is the cytoplasm. It carries out the reaction (S)-2,3,4,5-tetrahydrodipicolinate + NAD(+) + H2O = (2S,4S)-4-hydroxy-2,3,4,5-tetrahydrodipicolinate + NADH + H(+). It catalyses the reaction (S)-2,3,4,5-tetrahydrodipicolinate + NADP(+) + H2O = (2S,4S)-4-hydroxy-2,3,4,5-tetrahydrodipicolinate + NADPH + H(+). It functions in the pathway amino-acid biosynthesis; L-lysine biosynthesis via DAP pathway; (S)-tetrahydrodipicolinate from L-aspartate: step 4/4. Functionally, catalyzes the conversion of 4-hydroxy-tetrahydrodipicolinate (HTPA) to tetrahydrodipicolinate. The protein is 4-hydroxy-tetrahydrodipicolinate reductase of Synechococcus sp. (strain ATCC 27144 / PCC 6301 / SAUG 1402/1) (Anacystis nidulans).